A 325-amino-acid polypeptide reads, in one-letter code: NADH-quinone oxidoreductase subunit H (325 aa).

The next 8 membrane-spanning stretches (helical) occupy residues 11–31 (ILISVLKAVVILLVVVTCGAF), 81–101 (AIFTLAPVIAFTSLLLSFAIV), 114–134 (IGILFFLMMAGLAVYAVLFAG), 154–174 (LSYEVFLGLSLMGVVAQAGSF), 186–206 (VWNVIPQFFGFLTFAIAGVAV), 237–257 (FFVGEYIGIVTVSALIVTLFF), 265–285 (LPPFIWFALKTAFFMVMFILI), and 304–324 (VCLPLTLLNLLATAAVILYNA).

This sequence belongs to the complex I subunit 1 family. In terms of assembly, NDH-1 is composed of 13 different subunits. Subunits NuoA, H, J, K, L, M, N constitute the membrane sector of the complex.

The protein localises to the cell inner membrane. The enzyme catalyses a quinone + NADH + 5 H(+)(in) = a quinol + NAD(+) + 4 H(+)(out). In terms of biological role, NDH-1 shuttles electrons from NADH, via FMN and iron-sulfur (Fe-S) centers, to quinones in the respiratory chain. The immediate electron acceptor for the enzyme in this species is believed to be ubiquinone. Couples the redox reaction to proton translocation (for every two electrons transferred, four hydrogen ions are translocated across the cytoplasmic membrane), and thus conserves the redox energy in a proton gradient. This subunit may bind ubiquinone. The polypeptide is NADH-quinone oxidoreductase subunit H (Yersinia pseudotuberculosis serotype O:1b (strain IP 31758)).